We begin with the raw amino-acid sequence, 137 residues long: Large ribosomal subunit protein uL16 (137 aa).

It belongs to the universal ribosomal protein uL16 family. In terms of assembly, part of the 50S ribosomal subunit.

Its function is as follows. Binds 23S rRNA and is also seen to make contacts with the A and possibly P site tRNAs. In Sinorhizobium medicae (strain WSM419) (Ensifer medicae), this protein is Large ribosomal subunit protein uL16.